A 245-amino-acid polypeptide reads, in one-letter code: tRNA pseudouridine synthase A (245 aa).

Asp52 acts as the Nucleophile in catalysis. Tyr111 provides a ligand contact to substrate.

It belongs to the tRNA pseudouridine synthase TruA family. As to quaternary structure, homodimer.

The enzyme catalyses uridine(38/39/40) in tRNA = pseudouridine(38/39/40) in tRNA. Formation of pseudouridine at positions 38, 39 and 40 in the anticodon stem and loop of transfer RNAs. This is tRNA pseudouridine synthase A from Ehrlichia canis (strain Jake).